A 394-amino-acid polypeptide reads, in one-letter code: NAD(P)H-quinone oxidoreductase subunit H (394 aa).

Belongs to the complex I 49 kDa subunit family. In terms of assembly, NDH-1 can be composed of about 15 different subunits; different subcomplexes with different compositions have been identified which probably have different functions.

It is found in the cellular thylakoid membrane. It carries out the reaction a plastoquinone + NADH + (n+1) H(+)(in) = a plastoquinol + NAD(+) + n H(+)(out). It catalyses the reaction a plastoquinone + NADPH + (n+1) H(+)(in) = a plastoquinol + NADP(+) + n H(+)(out). In terms of biological role, NDH-1 shuttles electrons from an unknown electron donor, via FMN and iron-sulfur (Fe-S) centers, to quinones in the respiratory and/or the photosynthetic chain. The immediate electron acceptor for the enzyme in this species is believed to be plastoquinone. Couples the redox reaction to proton translocation, and thus conserves the redox energy in a proton gradient. Cyanobacterial NDH-1 also plays a role in inorganic carbon-concentration. The chain is NAD(P)H-quinone oxidoreductase subunit H from Synechococcus sp. (strain WH7803).